The chain runs to 618 residues: 2-succinyl-5-enolpyruvyl-6-hydroxy-3-cyclohexene-1-carboxylate synthase (618 aa).

The disordered stretch occupies residues 192–215 (DPVAERGRDGPYVDVTPGSPEPGD).

Belongs to the TPP enzyme family. MenD subfamily. Homodimer. It depends on Mg(2+) as a cofactor. The cofactor is Mn(2+). Requires thiamine diphosphate as cofactor.

The enzyme catalyses isochorismate + 2-oxoglutarate + H(+) = 5-enolpyruvoyl-6-hydroxy-2-succinyl-cyclohex-3-ene-1-carboxylate + CO2. It participates in quinol/quinone metabolism; 1,4-dihydroxy-2-naphthoate biosynthesis; 1,4-dihydroxy-2-naphthoate from chorismate: step 2/7. It functions in the pathway quinol/quinone metabolism; menaquinone biosynthesis. Functionally, catalyzes the thiamine diphosphate-dependent decarboxylation of 2-oxoglutarate and the subsequent addition of the resulting succinic semialdehyde-thiamine pyrophosphate anion to isochorismate to yield 2-succinyl-5-enolpyruvyl-6-hydroxy-3-cyclohexene-1-carboxylate (SEPHCHC). This Halorubrum lacusprofundi (strain ATCC 49239 / DSM 5036 / JCM 8891 / ACAM 34) protein is 2-succinyl-5-enolpyruvyl-6-hydroxy-3-cyclohexene-1-carboxylate synthase.